An 808-amino-acid chain; its full sequence is Ribosome biogenesis protein BOP1 homolog (808 aa).

2 stretches are compositionally biased toward low complexity: residues Met1 to Cys25 and Ala33 to Asp50. The disordered stretch occupies residues Met1–Asp55. WD repeat units lie at residues Gly430 to Arg469, Lys640 to Lys680, Ser682 to Lys720, Ser724 to Lys766, and Lys777 to Glu808.

The protein belongs to the WD repeat BOP1/ERB1 family.

Its subcellular location is the nucleus. It is found in the nucleolus. The protein resides in the nucleoplasm. Its function is as follows. Required for maturation of ribosomal RNAs and formation of the large ribosomal subunit. In Leishmania major, this protein is Ribosome biogenesis protein BOP1 homolog.